An 832-amino-acid polypeptide reads, in one-letter code: SID1 transmembrane family member 2 (832 aa).

Residues 1 to 15 (MIAWRLPLCVLLVAA) form the signal peptide. The Extracellular portion of the chain corresponds to 16–293 (VESHLGALGP…VSQAVTSEAY (278 aa)). N-linked (GlcNAc...) asparagine glycosylation is found at N27, N54, N60, N123, N141, and N165. The chain crosses the membrane as a helical span at residues 294 to 314 (VGGMLFCLGIFLSFYLLTVLL). The Cytoplasmic portion of the chain corresponds to 315 to 447 (ACWENWRQRK…DKRVLRKKYQ (133 aa)). Phosphoserine is present on residues S401, S403, and S404. Residues 448 to 468 (IYFWNIATIAVFYALPVVQLV) traverse the membrane as a helical segment. Residues 469-499 (ITYQTVVNVTGNQDICYYNFLCAHPLGNLSA) lie on the Extracellular side of the membrane. 2 N-linked (GlcNAc...) asparagine glycosylation sites follow: N476 and N496. The helical transmembrane segment at 500 to 520 (FNNILSNLGYILLGLLFLLII) threads the bilayer. Over 521-546 (LQREINHNRALLRNDLYALECGIPKH) the chain is Cytoplasmic. A helical transmembrane segment spans residues 547–567 (FGLFYAMGTALMMEGLLSACY). The Extracellular segment spans residues 568–605 (HVCPNYTNFQFDTSFMYMIAGLCMLKLYQKRHPDINAS). N-linked (GlcNAc...) asparagine glycans are attached at residues N572 and N603. The chain crosses the membrane as a helical span at residues 606–626 (AYSAYACLAIVIFFSVLGVVF). At 627–631 (GKGNT) the chain is on the cytoplasmic side. A helical transmembrane segment spans residues 632-652 (AFWIVFSVIHIISTLLLSTQL). Over 653–688 (YYMGRWKLDSGIFRRILHVLYTDCIRQCSGPLYTDR) the chain is Extracellular. The chain crosses the membrane as a helical span at residues 689–709 (MVLLVMGNIINWSLAAYGLIM). Residues 710–715 (RPNDFA) lie on the Cytoplasmic side of the membrane. A helical transmembrane segment spans residues 716–736 (SYLLAIGICNLLLYFAFYIIM). Over 737–746 (KLRSGERIKL) the chain is Extracellular. Residues 747-767 (IPLLCIVCTSVVWGFALFFFF) form a helical membrane-spanning segment. Over 768–796 (QGLSTWQKTPAESREHNRDCILLDFFDDH) the chain is Cytoplasmic. Residues 797–817 (DIWHFLSSIAMFGSFLVLLTL) traverse the membrane as a helical segment. The Extracellular segment spans residues 818–832 (DDDLDTVQRDKIYVF).

This sequence belongs to the SID1 family. As to quaternary structure, interacts with adapter protein complex 1 (AP-1) and AP-2, but not AP-3 and AP-4. Interacts with LAMP2. Post-translationally, glycosylated. In terms of tissue distribution, highly expressed in the liver, brain, kidney and intestine (at protein level).

It is found in the lysosome membrane. The protein resides in the cell membrane. Its function is as follows. Mediates the translocation of RNA and DNA across the lysosomal membrane during RNA and DNA autophagy (RDA), a process in which RNA or DNA is directly imported into lysosomes in an ATP-dependent manner, and degraded. Involved in the uptake of single-stranded oligonucleotides by living cells, a process called gymnosis. In vitro, mediates the uptake of linear DNA more efficiently than that of circular DNA, but exhibits similar uptake efficacy toward RNA and DNA. Binds long double-stranded RNA (dsRNA) (500 - 700 base pairs), but not dsRNA shorter than 100 bp. The chain is SID1 transmembrane family member 2 (Sidt2) from Rattus norvegicus (Rat).